We begin with the raw amino-acid sequence, 202 residues long: Small ribosomal subunit protein uS5 (202 aa).

The 64-residue stretch at 50–113 (LKQEILNINV…REAKLNLTPV (64 aa)) folds into the S5 DRBM domain.

The protein belongs to the universal ribosomal protein uS5 family. Part of the 30S ribosomal subunit. Contacts protein S4.

In terms of biological role, with S4 and S12 plays an important role in translational accuracy. In Pyrobaculum islandicum (strain DSM 4184 / JCM 9189 / GEO3), this protein is Small ribosomal subunit protein uS5.